A 280-amino-acid polypeptide reads, in one-letter code: UDP-3-O-acyl-N-acetylglucosamine deacetylase (280 aa).

3 residues coordinate Zn(2+): histidine 79, histidine 237, and aspartate 241. The active-site Proton donor is the histidine 264.

Belongs to the LpxC family. Requires Zn(2+) as cofactor.

The catalysed reaction is a UDP-3-O-[(3R)-3-hydroxyacyl]-N-acetyl-alpha-D-glucosamine + H2O = a UDP-3-O-[(3R)-3-hydroxyacyl]-alpha-D-glucosamine + acetate. It functions in the pathway glycolipid biosynthesis; lipid IV(A) biosynthesis; lipid IV(A) from (3R)-3-hydroxytetradecanoyl-[acyl-carrier-protein] and UDP-N-acetyl-alpha-D-glucosamine: step 2/6. Functionally, catalyzes the hydrolysis of UDP-3-O-myristoyl-N-acetylglucosamine to form UDP-3-O-myristoylglucosamine and acetate, the committed step in lipid A biosynthesis. This Chlamydia felis (strain Fe/C-56) (Chlamydophila felis) protein is UDP-3-O-acyl-N-acetylglucosamine deacetylase.